Reading from the N-terminus, the 450-residue chain is Tubulin alpha-1 chain (450 aa).

Glutamine 11 provides a ligand contact to GTP. The residue at position 40 (lysine 40) is an N6-acetyllysine. 7 residues coordinate GTP: glutamate 71, serine 140, glycine 144, threonine 145, threonine 179, asparagine 206, and asparagine 228. Glutamate 71 serves as a coordination point for Mg(2+). Glutamate 254 is an active-site residue.

It belongs to the tubulin family. In terms of assembly, dimer of alpha and beta chains. A typical microtubule is a hollow water-filled tube with an outer diameter of 25 nm and an inner diameter of 15 nM. Alpha-beta heterodimers associate head-to-tail to form protofilaments running lengthwise along the microtubule wall with the beta-tubulin subunit facing the microtubule plus end conferring a structural polarity. Microtubules usually have 13 protofilaments but different protofilament numbers can be found in some organisms and specialized cells. Interacts with Ote. The cofactor is Mg(2+). Post-translationally, undergoes a tyrosination/detyrosination cycle, the cyclic removal and re-addition of a C-terminal tyrosine residue by the enzymes tubulin tyrosine carboxypeptidase (TTCP) and tubulin tyrosine ligase (TTL), respectively. In terms of processing, acetylation of alpha chains at Lys-40 stabilizes microtubules and affects affinity and processivity of microtubule motors. This modification has a role in multiple cellular functions, ranging from cell motility, cell cycle progression or cell differentiation to intracellular trafficking and signaling. During the early stages of oogenesis lky/Alpha-tubulin N-acetyltransferase 2 is the main acetyltransferase responsible for Lys-40 acetylation in germline cells while Atat/alpha-tubulin N-acetyltransferase 1 is the main acetyltransferase responsible for Lys-40 acetylation in somatic cells.

It localises to the cytoplasm. The protein localises to the cytoskeleton. It catalyses the reaction GTP + H2O = GDP + phosphate + H(+). Functionally, tubulin is the major constituent of microtubules, a cylinder consisting of laterally associated linear protofilaments composed of alpha- and beta-tubulin heterodimers. Microtubules grow by the addition of GTP-tubulin dimers to the microtubule end, where a stabilizing cap forms. Below the cap, tubulin dimers are in GDP-bound state, owing to GTPase activity of alpha-tubulin. This Drosophila melanogaster (Fruit fly) protein is Tubulin alpha-1 chain (alphaTub84B).